Consider the following 371-residue polypeptide: UDP-N-acetylglucosamine--N-acetylmuramyl-(pentapeptide) pyrophosphoryl-undecaprenol N-acetylglucosamine transferase (371 aa).

UDP-N-acetyl-alpha-D-glucosamine contacts are provided by residues Thr-15–Gly-17, Asn-126, Arg-172, Ser-199, Ile-256, Ala-275–Glu-280, and Gln-301.

The protein belongs to the glycosyltransferase 28 family. MurG subfamily.

The protein resides in the cell inner membrane. It carries out the reaction di-trans,octa-cis-undecaprenyl diphospho-N-acetyl-alpha-D-muramoyl-L-alanyl-D-glutamyl-meso-2,6-diaminopimeloyl-D-alanyl-D-alanine + UDP-N-acetyl-alpha-D-glucosamine = di-trans,octa-cis-undecaprenyl diphospho-[N-acetyl-alpha-D-glucosaminyl-(1-&gt;4)]-N-acetyl-alpha-D-muramoyl-L-alanyl-D-glutamyl-meso-2,6-diaminopimeloyl-D-alanyl-D-alanine + UDP + H(+). The protein operates within cell wall biogenesis; peptidoglycan biosynthesis. Functionally, cell wall formation. Catalyzes the transfer of a GlcNAc subunit on undecaprenyl-pyrophosphoryl-MurNAc-pentapeptide (lipid intermediate I) to form undecaprenyl-pyrophosphoryl-MurNAc-(pentapeptide)GlcNAc (lipid intermediate II). The chain is UDP-N-acetylglucosamine--N-acetylmuramyl-(pentapeptide) pyrophosphoryl-undecaprenol N-acetylglucosamine transferase from Francisella tularensis subsp. holarctica (strain FTNF002-00 / FTA).